Consider the following 187-residue polypeptide: Elongation factor P (187 aa).

The protein belongs to the elongation factor P family.

It is found in the cytoplasm. It participates in protein biosynthesis; polypeptide chain elongation. In terms of biological role, involved in peptide bond synthesis. Stimulates efficient translation and peptide-bond synthesis on native or reconstituted 70S ribosomes in vitro. Probably functions indirectly by altering the affinity of the ribosome for aminoacyl-tRNA, thus increasing their reactivity as acceptors for peptidyl transferase. The chain is Elongation factor P from Pseudarthrobacter chlorophenolicus (strain ATCC 700700 / DSM 12829 / CIP 107037 / JCM 12360 / KCTC 9906 / NCIMB 13794 / A6) (Arthrobacter chlorophenolicus).